Here is a 311-residue protein sequence, read N- to C-terminus: tRNA dimethylallyltransferase (311 aa).

G12–T19 contributes to the ATP binding site. Residue T14 to T19 coordinates substrate. Interaction with substrate tRNA regions lie at residues D37–L40, Q161–R165, and R241–R246.

Belongs to the IPP transferase family. In terms of assembly, monomer. Mg(2+) serves as cofactor.

It catalyses the reaction adenosine(37) in tRNA + dimethylallyl diphosphate = N(6)-dimethylallyladenosine(37) in tRNA + diphosphate. In terms of biological role, catalyzes the transfer of a dimethylallyl group onto the adenine at position 37 in tRNAs that read codons beginning with uridine, leading to the formation of N6-(dimethylallyl)adenosine (i(6)A). The polypeptide is tRNA dimethylallyltransferase (Histophilus somni (strain 129Pt) (Haemophilus somnus)).